The chain runs to 433 residues: MATTWGAAFFMLVASCVCSTVFHRDQQTWFEGVFLSSMCPINVSASTLYGIMFDAGSTGTRIHIYTFVQKIPGQLPILEGEIFESVKPGLSAFVDQPKQGAETVEELLEVAKDSVPRSHWKRTPVVLKATAGLRLLPEQKAEALLFEVREIFRKSPFLVPDDSVSIMDGSYEGILAWVTVNFLTGQLHGHSQKTVGTLDLGGASTQITFLPQFEKTLEQTPRGYLTSFEMFNSTYKLYTHSYLGFGLKAARLATLGALETEGIDGHTFRSACLPRWLEAEWIFGGVKYQYGGNKEGNEGSGEVGFEPCYAEVLRVVQGKLHQPDEVRKSSFYAFSYYYDRAADTDMIDYETGGVLKVEDFERKAREVCDNLEKFTSGSPFLCMDLSYITALLKDGFGFADSTILQLSKKVNNIETGWALGATFHLLQSLGISH.

The N-terminal stretch at 1 to 24 (MATTWGAAFFMLVASCVCSTVFHR) is a signal peptide. The active-site Proton acceptor is the E172. A glycan (N-linked (GlcNAc...) asparagine) is linked at N232. 2 disulfides stabilise this stretch: C272-C308 and C368-C382.

Belongs to the GDA1/CD39 NTPase family. In terms of assembly, monomer; active form. Homodimer; disulfide-linked. Homodimers are enzymatically inactive. The cofactor is Ca(2+). Mg(2+) is required as a cofactor. In terms of processing, N-glycosylated; high-mannose type.

The protein localises to the endoplasmic reticulum. It is found in the secreted. It catalyses the reaction a ribonucleoside 5'-diphosphate + H2O = a ribonucleoside 5'-phosphate + phosphate + H(+). It carries out the reaction GDP + H2O = GMP + phosphate + H(+). The enzyme catalyses UDP + H2O = UMP + phosphate + H(+). The catalysed reaction is IDP + H2O = IMP + phosphate + H(+). It catalyses the reaction CDP + H2O = CMP + phosphate + H(+). It carries out the reaction ADP + H2O = AMP + phosphate + H(+). It functions in the pathway protein modification; protein glycosylation. Its function is as follows. Hydrolyzes nucleoside diphosphates with a preference for GDP, IDP and UDP compared to ADP and CDP. In the lumen of the endoplasmic reticulum, hydrolyzes UDP that acts as an end-product feedback inhibitor of the UDP-Glc:glycoprotein glucosyltransferases. UMP can be transported back by an UDP-sugar antiporter to the cytosol where it is consumed to regenerate UDP-glucose. Therefore, it positively regulates protein reglucosylation by clearing UDP from the ER lumen and by promoting the regeneration of UDP-glucose. Protein reglucosylation is essential to proper glycoprotein folding and quality control in the ER. The sequence is that of Ectonucleoside triphosphate diphosphohydrolase 5 (ENTPD5) from Ailuropoda melanoleuca (Giant panda).